The primary structure comprises 388 residues: Alanine racemase (388 aa).

Catalysis depends on Lys40, which acts as the Proton acceptor; specific for D-alanine. An N6-(pyridoxal phosphate)lysine modification is found at Lys40. Arg137 contributes to the substrate binding site. Tyr269 serves as the catalytic Proton acceptor; specific for L-alanine. Met318 provides a ligand contact to substrate.

Belongs to the alanine racemase family. It depends on pyridoxal 5'-phosphate as a cofactor.

The catalysed reaction is L-alanine = D-alanine. The protein operates within amino-acid biosynthesis; D-alanine biosynthesis; D-alanine from L-alanine: step 1/1. Functionally, catalyzes the interconversion of L-alanine and D-alanine. May also act on other amino acids. The protein is Alanine racemase (alr) of Halalkalibacterium halodurans (strain ATCC BAA-125 / DSM 18197 / FERM 7344 / JCM 9153 / C-125) (Bacillus halodurans).